Reading from the N-terminus, the 400-residue chain is Elongation factor Tu (400 aa).

The tr-type G domain maps to 10–209 (KPHVNVGTIG…AVDSYIPTPE (200 aa)). Positions 19 to 26 (GHVDHGKT) are G1. Residue 19–26 (GHVDHGKT) coordinates GTP. A Mg(2+)-binding site is contributed by Thr26. Residues 60-64 (GITIS) form a G2 region. The interval 81–84 (DCPG) is G3. GTP is bound by residues 81 to 85 (DCPGH) and 136 to 139 (NKAD). Residues 136–139 (NKAD) form a G4 region. A G5 region spans residues 174-176 (SGL).

The protein belongs to the TRAFAC class translation factor GTPase superfamily. Classic translation factor GTPase family. EF-Tu/EF-1A subfamily. In terms of assembly, monomer.

It is found in the cytoplasm. It catalyses the reaction GTP + H2O = GDP + phosphate + H(+). GTP hydrolase that promotes the GTP-dependent binding of aminoacyl-tRNA to the A-site of ribosomes during protein biosynthesis. This is Elongation factor Tu from Desulfitobacterium hafniense (strain DSM 10664 / DCB-2).